The chain runs to 225 residues: UPF0758 protein Shewmr7_0359 (225 aa).

The region spanning Val-102–Ile-224 is the MPN domain. The Zn(2+) site is built by His-173, His-175, and Asp-186. Residues His-173 to Asp-186 carry the JAMM motif motif.

This sequence belongs to the UPF0758 family.

The sequence is that of UPF0758 protein Shewmr7_0359 from Shewanella sp. (strain MR-7).